A 1792-amino-acid chain; its full sequence is Non-reducing polyketide synthase aptA (1792 aa).

Residues 1-395 (MKDNTHSTTL…PRSFAHSKLA (395 aa)) are N-terminal acylcarrier protein transacylase domain (SAT). A Ketosynthase family 3 (KS3) domain is found at 391-824 (HSKLAVVGMA…GGNTTVLLED (434 aa)). Residues Cys564, His699, and His742 each act as for beta-ketoacyl synthase activity in the active site. Residues 926–1243 (VFAFTGQGAF…NLVALHLAGC (318 aa)) are malonyl-CoA:ACP transacylase (MAT) domain. Residues 1308–1625 (TSLIHEIIEE…PRLLMDRFFS (318 aa)) form a product template (PT) domain region. The segment at 1312 to 1447 (HEIIEETIGE…GSVRFEADAE (136 aa)) is N-terminal hotdog fold. Residues 1312–1621 (HEIIEETIGE…FRRVPRLLMD (310 aa)) enclose the PKS/mFAS DH domain. The active-site Proton acceptor; for dehydratase activity is the His1344. Residues 1475–1621 (QASQLSKALS…FRRVPRLLMD (147 aa)) form a C-terminal hotdog fold region. Asp1533 functions as the Proton donor; for dehydratase activity in the catalytic mechanism. Positions 1634–1649 (VAASASSAPKTATKHA) are enriched in low complexity. The segment at 1634–1716 (VAASASSAPK…GPNGTTSQPE (83 aa)) is disordered. The span at 1664-1684 (TPSSLPTVQAQNTSPPQQVTP) shows a compositional bias: polar residues. Residues 1694–1705 (TPEEEKPGKADA) show a composition bias toward basic and acidic residues. The 78-residue stretch at 1715-1792 (PEATGVVGQC…DMMDWLEQYC (78 aa)) folds into the Carrier domain. At Ser1752 the chain carries O-(pantetheine 4'-phosphoryl)serine.

Requires pantetheine 4'-phosphate as cofactor.

It catalyses the reaction holo-[ACP] + 8 malonyl-CoA + acetyl-CoA + 8 H(+) = 3,6,8,9-tetrahydroxy-1-oxo-3-(2-oxopropyl)-1,2,3,4-tetrahydroanthracene-2-carboxyl-[ACP] + 8 CO2 + 9 CoA + 2 H2O. It functions in the pathway secondary metabolite biosynthesis. Its function is as follows. Non-reducing polyketide synthase (NRPKS); part of the gene cluster that mediates the biosynthesis of asperthecin, an anthraquinone pigment. Catalyzes the formation of the aromatic polyketide from acetyl coenzyme A and seven malonyl coenzyme A molecules. Through its product template (PT) domain, catalyzes the cyclization of the polyketide backbone via C6-C11 aldolcondensation. Polyketide is subsequently hydrolyzed from the NRPKS by the action of the hydrolase aptB into endocrocin-9-anthrone. Endocrocin-9-anthrone is then oxidized into endocrocin by aptC. Endocrocin is likely to decarboxylate spontaneously to form emodin which explains why there is no decarboxylase in the asperthecin biosynthesis cluster. Finally, aptC or another endogenous oxygenase catalyzes additional oxidation steps to form asperthecin. The protein is Non-reducing polyketide synthase aptA of Emericella nidulans (strain FGSC A4 / ATCC 38163 / CBS 112.46 / NRRL 194 / M139) (Aspergillus nidulans).